The following is a 554-amino-acid chain: MAIQHPDIQPAVNHSVQVAIAGAGPVGLMMANYLGQMGIDVLVVEKLDKLIDYPRAIGIDDEALRTMQSVGLVDNVLPHTTPWHAMRFLTPKGRCFADIQPMTDEFGWPRRNAFIQPQVDAVMLEGVSRFPNVRCLFSRELEAFSQQDDEVTLHLKTAEGLREIVKAQWLVACDGGASFVRRTLNVPFEGKTAPNQWIVVDIANDPLSTPHIYLCCDPVRPYVSAALPHAVRRFEFMVMPGETEEQLREPQNMRKLLSKVLPNPDNVELIRQRVYTHNARLAQRFRIDRVLLAGDAAHIMPVWQGQGYNSGMRDAFNLAWKLALVIQGKARDALLDTYQQERRDHAKAMIDLSVTAGNVLAPPKRWQGTLRDGVSWLLNYLPPVKRYFLEMRFKPMPQYYGGALVREGEAKHSPVGKMFIQPKVTLENGDVTLLDNAIGANFAVIGWGCNPLWGMSDEQIQQWRALSTRFIQVVPEVQIHTAQDNHDGVLRVGDTQGRLRSWFAQHNASLVVMRPDRFVAATAIPQTLGKTLNKLASVMTLTRPDADVSVEKVA.

FAD is bound by residues 17–46 (QVAIAGAGPVGLMMANYLGQMGIDVLVVEK) and 285–295 (FRIDRVLLAGD).

The protein belongs to the PheA/TfdB FAD monooxygenase family. FAD serves as cofactor.

The enzyme catalyses 3-(3-hydroxyphenyl)propanoate + NADH + O2 + H(+) = 3-(2,3-dihydroxyphenyl)propanoate + NAD(+) + H2O. The catalysed reaction is (2E)-3-(3-hydroxyphenyl)prop-2-enoate + NADH + O2 + H(+) = (2E)-3-(2,3-dihydroxyphenyl)prop-2-enoate + NAD(+) + H2O. The protein operates within aromatic compound metabolism; 3-phenylpropanoate degradation. Functionally, catalyzes the insertion of one atom of molecular oxygen into position 2 of the phenyl ring of 3-(3-hydroxyphenyl)propionate (3-HPP) and hydroxycinnamic acid (3HCI). This chain is 3-(3-hydroxy-phenyl)propionate/3-hydroxycinnamic acid hydroxylase, found in Escherichia coli O157:H7.